We begin with the raw amino-acid sequence, 256 residues long: MLLVFDVGNTNMVLGIYKGDKLVNYWRIKTDREKTSDEYGILISNLFDYDNVNISDIDDVIISSVVPNVMHSLENFCIKYCKKQPLIVGPGIKTGLNIKYDNPKQVGADRIVNAVAGIEKYGAPSILVDFGTATTFCAISEKGEYLGGTIAPGIKISSEALFQSASKLPRVELAKPGMTICKSTVSAMQSGIIYGYVGLVDKIISIMKKELNCDDVKVIATGGLAKLIASETKSIDYVDGFLTLEGLRIIYEKNQE.

6–13 (DVGNTNMV) lines the ATP pocket. Substrate contacts are provided by residues Y100 and 107–110 (GADR). D109 (proton acceptor) is an active-site residue. D129 provides a ligand contact to K(+). ATP is bound at residue T132. T184 lines the substrate pocket.

The protein belongs to the type III pantothenate kinase family. As to quaternary structure, homodimer. NH4(+) serves as cofactor. Requires K(+) as cofactor.

It is found in the cytoplasm. It carries out the reaction (R)-pantothenate + ATP = (R)-4'-phosphopantothenate + ADP + H(+). The protein operates within cofactor biosynthesis; coenzyme A biosynthesis; CoA from (R)-pantothenate: step 1/5. Catalyzes the phosphorylation of pantothenate (Pan), the first step in CoA biosynthesis. This chain is Type III pantothenate kinase, found in Clostridioides difficile (strain 630) (Peptoclostridium difficile).